The primary structure comprises 424 residues: Serine/threonine-protein kinase H1 (424 aa).

G2 carries the N-myristoyl glycine lipid modification. Residue C3 is the site of S-palmitoyl cysteine attachment. A disordered region spans residues 56-80 (SQYAHPCPGPPTAGHTEPPSEPPRR). Residues 98 to 355 (YDIKALIGRG…ALQALRHPWV (258 aa)) form the Protein kinase domain. ATP contacts are provided by residues 104–112 (IGRGSFSRV) and K127. Residue D218 is the Proton acceptor of the active site. The interval 378 to 407 (RASSRCQSTKSAQSTRSSRSTRSNKSRRVR) is disordered. A phosphoserine; by autocatalysis mark is found at S380 and S381. Positions 385 to 398 (STKSAQSTRSSRST) are enriched in low complexity.

The protein belongs to the protein kinase superfamily. CAMK Ser/Thr protein kinase family. As to quaternary structure, homodimer. In terms of processing, autophosphorylated on serine residues. Post-translationally, myristoylated. Required for membrane association. Prerequisite for palmitoylation to occur. Palmitoylated. In terms of tissue distribution, expressed in all tissues and cell lines tested with the highest level of abundance in testis.

The protein resides in the golgi apparatus. Its subcellular location is the cytoplasm. It is found in the cytoskeleton. The protein localises to the microtubule organizing center. It localises to the centrosome. The protein resides in the nucleus speckle. Its subcellular location is the endoplasmic reticulum membrane. It is found in the cell membrane. It catalyses the reaction L-seryl-[protein] + ATP = O-phospho-L-seryl-[protein] + ADP + H(+). The enzyme catalyses L-threonyl-[protein] + ATP = O-phospho-L-threonyl-[protein] + ADP + H(+). Its activity is regulated as follows. Activity depends on Ca(2+) concentration. In terms of biological role, serine/threonine protein kinase that may be involved in the regulation of pre-mRNA processing. It may phosphorylate components of nuclear splice factor compartments (SFC), such as non-snRNP splicing factors containing a serine/arginine-rich domain (SR proteins). Reversible phosphorylation of SR proteins may cause their release into the nucleoplasm and change their local concentration, thereby influencing alternative splicing. This is Serine/threonine-protein kinase H1 (PSKH1) from Homo sapiens (Human).